Reading from the N-terminus, the 264-residue chain is Thymidylate synthase (264 aa).

Arg-21 is a binding site for dUMP. His-51 contributes to the (6R)-5,10-methylene-5,6,7,8-tetrahydrofolate binding site. 126 to 127 (RR) contacts dUMP. The active-site Nucleophile is Cys-146. DUMP contacts are provided by residues 166–169 (RSAD), Asn-177, and 207–209 (HIY). Asp-169 contributes to the (6R)-5,10-methylene-5,6,7,8-tetrahydrofolate binding site. Ala-263 contacts (6R)-5,10-methylene-5,6,7,8-tetrahydrofolate.

This sequence belongs to the thymidylate synthase family. Bacterial-type ThyA subfamily. As to quaternary structure, homodimer.

The protein resides in the cytoplasm. It carries out the reaction dUMP + (6R)-5,10-methylene-5,6,7,8-tetrahydrofolate = 7,8-dihydrofolate + dTMP. It participates in pyrimidine metabolism; dTTP biosynthesis. Catalyzes the reductive methylation of 2'-deoxyuridine-5'-monophosphate (dUMP) to 2'-deoxythymidine-5'-monophosphate (dTMP) while utilizing 5,10-methylenetetrahydrofolate (mTHF) as the methyl donor and reductant in the reaction, yielding dihydrofolate (DHF) as a by-product. This enzymatic reaction provides an intracellular de novo source of dTMP, an essential precursor for DNA biosynthesis. This is Thymidylate synthase from Porphyromonas gingivalis (strain ATCC BAA-308 / W83).